The chain runs to 398 residues: 4-hydroxy-3-methylbut-2-en-1-yl diphosphate synthase (ferredoxin) (398 aa).

4 residues coordinate [4Fe-4S] cluster: Cys306, Cys309, Cys340, and Glu347.

It belongs to the IspG family. [4Fe-4S] cluster is required as a cofactor.

The catalysed reaction is (2E)-4-hydroxy-3-methylbut-2-enyl diphosphate + 2 oxidized [2Fe-2S]-[ferredoxin] + H2O = 2-C-methyl-D-erythritol 2,4-cyclic diphosphate + 2 reduced [2Fe-2S]-[ferredoxin] + H(+). It functions in the pathway isoprenoid biosynthesis; isopentenyl diphosphate biosynthesis via DXP pathway; isopentenyl diphosphate from 1-deoxy-D-xylulose 5-phosphate: step 5/6. In terms of biological role, converts 2C-methyl-D-erythritol 2,4-cyclodiphosphate (ME-2,4cPP) into 1-hydroxy-2-methyl-2-(E)-butenyl 4-diphosphate. The protein is 4-hydroxy-3-methylbut-2-en-1-yl diphosphate synthase (ferredoxin) of Synechococcus sp. (strain CC9311).